A 345-amino-acid chain; its full sequence is Dihydroorotase (345 aa).

Residues histidine 13 and histidine 15 each coordinate Zn(2+). Residues 15–17 and asparagine 41 each bind substrate; that span reads HFR. Positions 98, 135, and 173 each coordinate Zn(2+). Residue lysine 98 is modified to N6-carboxylysine. Residue histidine 135 coordinates substrate. Substrate is bound at residue leucine 218. Aspartate 246 contacts Zn(2+). The active site involves aspartate 246. Residues histidine 250 and alanine 262 each contribute to the substrate site.

The protein belongs to the metallo-dependent hydrolases superfamily. DHOase family. Class II DHOase subfamily. Homodimer. It depends on Zn(2+) as a cofactor.

The enzyme catalyses (S)-dihydroorotate + H2O = N-carbamoyl-L-aspartate + H(+). It functions in the pathway pyrimidine metabolism; UMP biosynthesis via de novo pathway; (S)-dihydroorotate from bicarbonate: step 3/3. In terms of biological role, catalyzes the reversible cyclization of carbamoyl aspartate to dihydroorotate. This Shewanella pealeana (strain ATCC 700345 / ANG-SQ1) protein is Dihydroorotase.